Here is a 219-residue protein sequence, read N- to C-terminus: Outer spore wall protein 4 (219 aa).

The first 19 residues, 1-19 (MRFQLFIYFYFTIVVIAGT), serve as a signal peptide directing secretion. Over 20–170 (NTIQQFSDAG…KKKRLDRIKR (151 aa)) the chain is Extracellular. 3 N-linked (GlcNAc...) asparagine glycosylation sites follow: Asn-42, Asn-62, and Asn-136. A helical membrane pass occupies residues 171–191 (ILTVSLLELGLAQGVADLCAV). At 192–193 (AP) the chain is on the cytoplasmic side. The helical transmembrane segment at 194–214 (FACLLGVTVGSIGFIFWLALI) threads the bilayer. The Extracellular portion of the chain corresponds to 215–219 (YNAIQ).

This sequence belongs to the OSW4/6 family. In terms of processing, N-glycosylated.

The protein localises to the membrane. Involved in spore wall assembly. May be involved in maintaining genome integrity. This is Outer spore wall protein 4 from Saccharomyces cerevisiae (strain ATCC 204508 / S288c) (Baker's yeast).